The chain runs to 105 residues: Probable non-functional immunoglobulin lambda variable 5-48 (105 aa).

A signal peptide spans 1-19 (MAWTPLLLLFLSHCTGSLS). Residues 20-44 (QAVLTQPTSLSASPGASARLTCTLR) form a framework-1 region. One can recognise an Ig-like domain in the interval 20-105 (QAVLTQPTSL…NAGILFISGL (86 aa)). The interval 45–53 (SGISVGSYR) is complementarity-determining-1. The segment at 54 to 70 (IYWYQQKPGSPPRYLLN) is framework-2. Residues 71-77 (YYSDSDK) are complementarity-determining-2. Residues 78-105 (HQGSGVPSRFSGSKDASTNAGILFISGL) form a framework-3 region.

Immunoglobulins are composed of two identical heavy chains and two identical light chains; disulfide-linked.

The protein resides in the secreted. Its subcellular location is the cell membrane. Functionally, probable non-functional open reading frame (ORF) of V region of the variable domain of immunoglobulin light chains. Non-functional ORF generally cannot participate in the synthesis of a productive immunoglobulin chain due to altered V-(D)-J or switch recombination and/or splicing site (at mRNA level) and/or conserved amino acid change (protein level). Immunoglobulins, also known as antibodies, are membrane-bound or secreted glycoproteins produced by B lymphocytes. In the recognition phase of humoral immunity, the membrane-bound immunoglobulins serve as receptors which, upon binding of a specific antigen, trigger the clonal expansion and differentiation of B lymphocytes into immunoglobulins-secreting plasma cells. Secreted immunoglobulins mediate the effector phase of humoral immunity, which results in the elimination of bound antigens. The antigen binding site is formed by the variable domain of one heavy chain, together with that of its associated light chain. Thus, each immunoglobulin has two antigen binding sites with remarkable affinity for a particular antigen. The variable domains are assembled by a process called V-(D)-J rearrangement and can then be subjected to somatic hypermutations which, after exposure to antigen and selection, allow affinity maturation for a particular antigen. The chain is Probable non-functional immunoglobulin lambda variable 5-48 from Homo sapiens (Human).